We begin with the raw amino-acid sequence, 423 residues long: Glycine amidinotransferase, mitochondrial (423 aa).

A mitochondrion-targeting transit peptide spans 1–43 (MLRVRCLRGGSRGAEAVHYIGSRLGRTLTGWVQRTFQSTQAAT). A phosphoserine mark is found at Ser-46 and Ser-49. Residue Asp-170 participates in arginine binding. Active-site residues include Asp-254 and His-303. Asp-305, Arg-322, Ser-354, and Ser-355 together coordinate arginine. Lys-385 is modified (N6-acetyllysine). Cys-407 serves as the catalytic Amidino-cysteine intermediate.

It belongs to the amidinotransferase family. In terms of assembly, homodimer. There is an equilibrium between the monomeric and dimeric forms, shifted towards the side of the monomer. As to expression, expressed in brain, heart, kidney, liver, lung, salivary gland and skeletal muscle tissue, with the highest expression in kidney. Biallelically expressed in placenta and fetal tissues.

Its subcellular location is the mitochondrion inner membrane. The protein resides in the cytoplasm. It catalyses the reaction L-arginine + glycine = guanidinoacetate + L-ornithine. It carries out the reaction 4-aminobutanoate + L-arginine = 4-guanidinobutanoate + L-ornithine. The enzyme catalyses beta-alanine + L-arginine = 3-guanidinopropanoate + L-ornithine. The catalysed reaction is taurine + L-arginine = taurocyamine + L-ornithine. The protein operates within amine and polyamine biosynthesis; creatine biosynthesis; creatine from L-arginine and glycine: step 1/2. Functionally, transamidinase that catalyzes the transfer of the amidino group of L-arginine onto the amino moiety of acceptor metabolites such as glycine, beta-alanine, gamma-aminobutyric acid (GABA) and taurine yielding the corresponding guanidine derivatives. Catalyzes the rate-limiting step of creatine biosynthesis, namely the transfer of the amidino group from L-arginine to glycine to generate guanidinoacetate, which is then methylated by GAMT to form creatine. Provides creatine as a source for ATP generation in tissues with high energy demands, in particular skeletal muscle, heart and brain. The sequence is that of Glycine amidinotransferase, mitochondrial (GATM) from Homo sapiens (Human).